Here is a 360-residue protein sequence, read N- to C-terminus: GTPase Obg (360 aa).

The 156-residue stretch at 1 to 156 (MFVDSVEIII…KCVRLELKLI (156 aa)) folds into the Obg domain. An OBG-type G domain is found at 157–360 (ADIGLVGFPN…LKFVLLKALQ (204 aa)). GTP contacts are provided by residues 163 to 170 (GFPNAGKS), 188 to 192 (FTTLV), 210 to 213 (DIPG), 279 to 282 (NKCD), and 341 to 343 (SAV). Residues Ser-170 and Thr-190 each coordinate Mg(2+).

It belongs to the TRAFAC class OBG-HflX-like GTPase superfamily. OBG GTPase family. As to quaternary structure, monomer. Mg(2+) serves as cofactor.

The protein resides in the cytoplasm. Its function is as follows. An essential GTPase which binds GTP, GDP and possibly (p)ppGpp with moderate affinity, with high nucleotide exchange rates and a fairly low GTP hydrolysis rate. Plays a role in control of the cell cycle, stress response, ribosome biogenesis and in those bacteria that undergo differentiation, in morphogenesis control. The sequence is that of GTPase Obg from Helicobacter pylori (strain P12).